A 108-amino-acid polypeptide reads, in one-letter code: Glutaredoxin-1 (108 aa).

Residues 3–106 form the Glutaredoxin domain; sequence EEFVQQRLAN…DILSSIGVLR (104 aa). Cys23 and Cys26 are disulfide-bonded.

Belongs to the glutaredoxin family.

The protein resides in the virion. Functionally, has thioltransferase and dehydroascorbate reductase activities. The chain is Glutaredoxin-1 (OPG075) from Ectromelia virus (strain Moscow) (ECTV).